We begin with the raw amino-acid sequence, 1055 residues long: Vacuolar protein sorting-associated protein 54 (1055 aa).

Residues 363–383 (TKKIIEVHQKYEQKKHLLAKL) adopt a coiled-coil conformation. Residues 774 to 794 (IDDGPTKKPFKRTGSSATIDS) form a disordered region.

It belongs to the VPS54 family. Component of the Golgi-associated retrograde protein (GARP) complex, also called VFT (VPS fifty-three) complex, composed of VPS51, VPS52, VPS53 and VPS54.

It is found in the golgi apparatus. Its subcellular location is the trans-Golgi network. In terms of biological role, acts as a component of the GARP complex that is involved in retrograde transport from early and late endosomes to the trans-Golgi network (TGN). The GARP complex facilitates tethering as well as SNARE complex assembly at the Golgi. This Caenorhabditis briggsae protein is Vacuolar protein sorting-associated protein 54 (vps-54).